Reading from the N-terminus, the 516-residue chain is Flavonoid 3',5'-hydroxylase (516 aa).

Heme is bound at residue cysteine 453.

The protein belongs to the cytochrome P450 family. Heme serves as cofactor.

It carries out the reaction a 3',5'-unsubstituted flavanone + 2 reduced [NADPH--hemoprotein reductase] + 2 O2 = a 3',5'-dihydroxyflavanone + 2 oxidized [NADPH--hemoprotein reductase] + 2 H2O + 2 H(+). Its pathway is pigment biosynthesis; anthocyanin biosynthesis. Functionally, catalyzes the 3'5'-hydroxylation of naringenin and eriodictyol to form 5,7,3,'4',5'-pentahydroxyflavanone and 3',5'-hydroxylation of dihydrokaempferol and dihydroquercetin to form dihydromyricetin. The polypeptide is Flavonoid 3',5'-hydroxylase (CYP75A4) (Gentiana triflora (Clustered gentian)).